Here is a 157-residue protein sequence, read N- to C-terminus: Peroxiredoxin Bcp (157 aa).

The Thioredoxin domain maps to 3–156; that stretch reads IEIGQKAPDL…ALQTLKDMSE (154 aa). Catalysis depends on Cys-45, which acts as the Cysteine sulfenic acid (-SOH) intermediate. The cysteines at positions 45 and 50 are disulfide-linked.

The protein belongs to the peroxiredoxin family. BCP/PrxQ subfamily. Monomer.

It carries out the reaction a hydroperoxide + [thioredoxin]-dithiol = an alcohol + [thioredoxin]-disulfide + H2O. Its function is as follows. Thiol-specific peroxidase that catalyzes the reduction of hydrogen peroxide and organic hydroperoxides to water and alcohols, respectively. Plays a role in cell protection against oxidative stress by detoxifying peroxides and as sensor of hydrogen peroxide-mediated signaling events. The chain is Peroxiredoxin Bcp (ygaF) from Bacillus subtilis (strain 168).